A 174-amino-acid polypeptide reads, in one-letter code: MALDNPTVLARLQAALPDALLGSSEFRGDLSVHVRPERIVDVARFLRDDPELRYHFLENLCGVDYLGREPRFEVVYHLLSFANRHRICLKVGVSERNPSVPSLTELWPGANYHERETFDMFGIVFTGHPCLDRILMPEDWEGHPLRKDVPLGAEEVAFTFNQDRIYAHKPFAKE.

It belongs to the complex I 30 kDa subunit family. NDH-1 is composed of 14 different subunits. Subunits NuoB, C, D, E, F, and G constitute the peripheral sector of the complex.

The protein localises to the cell membrane. It carries out the reaction a quinone + NADH + 5 H(+)(in) = a quinol + NAD(+) + 4 H(+)(out). Its function is as follows. NDH-1 shuttles electrons from NADH, via FMN and iron-sulfur (Fe-S) centers, to quinones in the respiratory chain. The immediate electron acceptor for the enzyme in this species is believed to be ubiquinone. Couples the redox reaction to proton translocation (for every two electrons transferred, four hydrogen ions are translocated across the cytoplasmic membrane), and thus conserves the redox energy in a proton gradient. In Roseiflexus castenholzii (strain DSM 13941 / HLO8), this protein is NADH-quinone oxidoreductase subunit C.